Reading from the N-terminus, the 165-residue chain is Protein FAM219A (165 aa).

Methionine 1 carries the post-translational modification N-acetylmethionine. Residues 1 to 114 (MMEEIDRFQV…SRYSSSGYSS (114 aa)) form a disordered region. Residues 32–44 (CDAREEKQRELAR) show a composition bias toward basic and acidic residues. Positions 49 to 63 (KNGSMGSPVNQQPKK) are enriched in polar residues. Phosphoserine is present on residues serine 55 and serine 85. Threonine 96 carries the post-translational modification Phosphothreonine. Phosphoserine is present on residues serine 98 and serine 105. Residues 105 to 114 (SRYSSSGYSS) show a composition bias toward low complexity.

The protein belongs to the FAM219 family.

The sequence is that of Protein FAM219A (FAM219A) from Macaca fascicularis (Crab-eating macaque).